The sequence spans 395 residues: MRN complex-interacting protein (395 aa).

Residues D90–V100 show a composition bias toward basic and acidic residues. Disordered regions lie at residues D90–C155 and K180–S275. Polar residues predominate over residues S104–G113. The span at E117–V127 shows a compositional bias: acidic residues. The Nuclear localization signal (NLS) motif lies at R142 to M145. The segment covering S183–S195 has biased composition (low complexity). Polar residues-rich tracts occupy residues A224–S244 and Q260–Q270.

It belongs to the MRNIP family.

Its subcellular location is the nucleus. It is found in the nucleoplasm. Plays a role in the cellular response to DNA damage and the maintenance of genome stability through its association with the MRN damage-sensing complex. Promotes chromatin loading and activity of the MRN complex to facilitate subsequent ATM-mediated DNA damage response signaling and DNA repair. This is MRN complex-interacting protein from Danio rerio (Zebrafish).